Reading from the N-terminus, the 445-residue chain is Tubby-like F-box protein 10 (445 aa).

One can recognise an F-box domain in the interval 57–112 (SRWANLPPELLFDVIKRLEESESNWPARKHVVACASVCRSWRAMCQEIVLGPEICG). The segment covering 382–398 (PQPQGTGAAAAPTSAPA) has biased composition (low complexity). Positions 382–401 (PQPQGTGAAAAPTSAPAHPE) are disordered.

It belongs to the TUB family. As to quaternary structure, part of a SCF (ASK-cullin-F-box) protein ligase complex. Interacts with SKP1A/ASK1. As to expression, ubiquitous.

It is found in the nucleus. Its pathway is protein modification; protein ubiquitination. Component of SCF(ASK-cullin-F-box) E3 ubiquitin ligase complexes, which may mediate the ubiquitination and subsequent proteasomal degradation of target proteins. The chain is Tubby-like F-box protein 10 from Arabidopsis thaliana (Mouse-ear cress).